The chain runs to 136 residues: Probable intron-encoded DNA endonuclease 3 (136 aa).

Belongs to the LAGLIDADG endonuclease family.

The protein resides in the mitochondrion. Its function is as follows. Mitochondrial DNA endonuclease involved in intron homing. This is Probable intron-encoded DNA endonuclease 3 (hegI3) from Mycosarcoma maydis (Corn smut fungus).